An 861-amino-acid polypeptide reads, in one-letter code: DNA mismatch repair protein MutS (861 aa).

An ATP-binding site is contributed by 618–625; that stretch reads GPNMGGKS.

The protein belongs to the DNA mismatch repair MutS family.

Its function is as follows. This protein is involved in the repair of mismatches in DNA. It is possible that it carries out the mismatch recognition step. This protein has a weak ATPase activity. The polypeptide is DNA mismatch repair protein MutS (Shewanella sp. (strain MR-4)).